The sequence spans 334 residues: Ribosomal RNA large subunit methyltransferase F (334 aa).

Residues 1–25 (MPRPSSPRPDAERKSASPLHPRNRH) form a disordered region.

It belongs to the methyltransferase superfamily. METTL16/RlmF family.

The protein localises to the cytoplasm. It catalyses the reaction adenosine(1618) in 23S rRNA + S-adenosyl-L-methionine = N(6)-methyladenosine(1618) in 23S rRNA + S-adenosyl-L-homocysteine + H(+). Its function is as follows. Specifically methylates the adenine in position 1618 of 23S rRNA. This chain is Ribosomal RNA large subunit methyltransferase F, found in Pseudomonas paraeruginosa (strain DSM 24068 / PA7) (Pseudomonas aeruginosa (strain PA7)).